The primary structure comprises 382 residues: 3-phytase (382 aa).

The first 26 residues, 1–26 (MKVPKTMLLSTAAGLLLSLTATSVSA), serve as a signal peptide directing secretion. Positions 27–361 (HYVNEEHHFK…VSWEQIAQHL (335 aa)) constitute a BPP domain.

It is found in the secreted. It carries out the reaction 1D-myo-inositol hexakisphosphate + H2O = 1D-myo-inositol 1,2,4,5,6-pentakisphosphate + phosphate. This Bacillus subtilis (strain 168) protein is 3-phytase (phy).